Consider the following 276-residue polypeptide: Urease accessory protein UreD (276 aa).

This sequence belongs to the UreD family. UreD, UreF and UreG form a complex that acts as a GTP-hydrolysis-dependent molecular chaperone, activating the urease apoprotein by helping to assemble the nickel containing metallocenter of UreC. The UreE protein probably delivers the nickel.

It localises to the cytoplasm. In terms of biological role, required for maturation of urease via the functional incorporation of the urease nickel metallocenter. This Paracidovorax citrulli (strain AAC00-1) (Acidovorax citrulli) protein is Urease accessory protein UreD.